A 97-amino-acid polypeptide reads, in one-letter code: Large ribosomal subunit protein bL28 (97 aa).

The tract at residues 1-20 (MSRRCELTAKGPQVGHKVSH) is disordered.

Belongs to the bacterial ribosomal protein bL28 family.

The chain is Large ribosomal subunit protein bL28 from Afipia carboxidovorans (strain ATCC 49405 / DSM 1227 / KCTC 32145 / OM5) (Oligotropha carboxidovorans).